Consider the following 423-residue polypeptide: Glutamate-1-semialdehyde 2,1-aminomutase (423 aa).

An N6-(pyridoxal phosphate)lysine modification is found at Lys259.

It belongs to the class-III pyridoxal-phosphate-dependent aminotransferase family. HemL subfamily. As to quaternary structure, homodimer. It depends on pyridoxal 5'-phosphate as a cofactor.

The protein localises to the cytoplasm. It catalyses the reaction (S)-4-amino-5-oxopentanoate = 5-aminolevulinate. Its pathway is porphyrin-containing compound metabolism; protoporphyrin-IX biosynthesis; 5-aminolevulinate from L-glutamyl-tRNA(Glu): step 2/2. The polypeptide is Glutamate-1-semialdehyde 2,1-aminomutase (Thermosipho africanus (strain TCF52B)).